A 78-amino-acid polypeptide reads, in one-letter code: UPF0349 protein RBAM_029300 (78 aa).

It belongs to the UPF0349 family.

This is UPF0349 protein RBAM_029300 from Bacillus velezensis (strain DSM 23117 / BGSC 10A6 / LMG 26770 / FZB42) (Bacillus amyloliquefaciens subsp. plantarum).